Reading from the N-terminus, the 780-residue chain is Acetyl-CoA decarbonylase/synthase complex subunit alpha (780 aa).

[4Fe-4S] cluster-binding residues include Cys73, Cys76, Cys77, Cys79, Cys84, and Cys93. A CO-binding site is contributed by His116. Positions 250, 278, and 317 each coordinate [Ni-4Fe-4S] cluster. 4Fe-4S ferredoxin-type domains are found at residues 399–429 (IDEI…MDAV) and 440–469 (LEEM…VSMV). Cys409, Cys412, Cys415, Cys419, Cys449, Cys452, Cys455, and Cys459 together coordinate [4Fe-4S] cluster. The [Ni-4Fe-4S] cluster site is built by Cys517, Cys546, and Cys581.

Belongs to the Ni-containing carbon monoxide dehydrogenase family. Heterotetramer of two alpha and two epsilon subunits. The ACDS complex is made up of alpha, epsilon, beta, gamma and delta subunits with a probable stoichiometry of (alpha(2)epsilon(2))(4)-beta(8)-(gamma(1)delta(1))(8). It depends on [4Fe-4S] cluster as a cofactor. [Ni-4Fe-4S] cluster serves as cofactor.

The catalysed reaction is CO + 2 oxidized [2Fe-2S]-[ferredoxin] + H2O = 2 reduced [2Fe-2S]-[ferredoxin] + CO2 + 2 H(+). In terms of biological role, part of the ACDS complex that catalyzes the reversible cleavage of acetyl-CoA, allowing autotrophic growth from CO(2). The alpha-epsilon subcomponent functions as a carbon monoxide dehydrogenase. This chain is Acetyl-CoA decarbonylase/synthase complex subunit alpha, found in Methanothermobacter thermautotrophicus (strain ATCC 29096 / DSM 1053 / JCM 10044 / NBRC 100330 / Delta H) (Methanobacterium thermoautotrophicum).